A 501-amino-acid polypeptide reads, in one-letter code: MPFSADSVTSLRQLADALAARSVSAEELARTYLARIEQAGALNAFTHVDAERTLAQAREADARRARGEATLLTGVPVAHKDVFVTRGWRATAGSKMLANYESPFDATVVERMAAAGMVTLGKTNMDEFAMGSSNENSFFGAVRNPWDTDRVPGGSSGGSAAAVAAGLAPAATGTDTGGSIRQPSSFSGITGIKPTYGRVSRYGMIAFASSLDQGGPMAHTAEDCALLLNAMAGFDAKDSTSIPPEQGGVDEDFARYLGQPRAGASESQPLAGLRIGLPREYFGKGLSPDVEETVRAALRQYEQLGATLVEVSLPKTELSIPVYYVIAPAEASSNLSRFDGVRYGHRAAEYRDLLDMYKKSRAEGFGAEVKRRIMVGTYVLSHGYYDAYYLQAQKIRRIIADDFQRAFAQCDVIMGPVAPTVAWKLGEKTSDPVQMYLADIFTLSTSLAGLPGMSVPCGFGDGNMPVGLQLIGNYFDEARLLQTAHAFQQATDWHLRRPAKA.

Residues Lys80 and Ser155 each act as charge relay system in the active site. The Acyl-ester intermediate role is filled by Ser179.

The protein belongs to the amidase family. GatA subfamily. As to quaternary structure, heterotrimer of A, B and C subunits.

It catalyses the reaction L-glutamyl-tRNA(Gln) + L-glutamine + ATP + H2O = L-glutaminyl-tRNA(Gln) + L-glutamate + ADP + phosphate + H(+). Its function is as follows. Allows the formation of correctly charged Gln-tRNA(Gln) through the transamidation of misacylated Glu-tRNA(Gln) in organisms which lack glutaminyl-tRNA synthetase. The reaction takes place in the presence of glutamine and ATP through an activated gamma-phospho-Glu-tRNA(Gln). The protein is Glutamyl-tRNA(Gln) amidotransferase subunit A of Cupriavidus pinatubonensis (strain JMP 134 / LMG 1197) (Cupriavidus necator (strain JMP 134)).